Reading from the N-terminus, the 273-residue chain is Hydroxyethylthiazole kinase 2 (273 aa).

A substrate-binding site is contributed by Met-45. Residues Lys-120 and Thr-173 each coordinate ATP. Residue Gly-200 participates in substrate binding.

It belongs to the Thz kinase family. Mg(2+) is required as a cofactor.

The enzyme catalyses 5-(2-hydroxyethyl)-4-methylthiazole + ATP = 4-methyl-5-(2-phosphooxyethyl)-thiazole + ADP + H(+). It participates in cofactor biosynthesis; thiamine diphosphate biosynthesis; 4-methyl-5-(2-phosphoethyl)-thiazole from 5-(2-hydroxyethyl)-4-methylthiazole: step 1/1. Its function is as follows. Catalyzes the phosphorylation of the hydroxyl group of 4-methyl-5-beta-hydroxyethylthiazole (THZ). This chain is Hydroxyethylthiazole kinase 2, found in Leuconostoc mesenteroides subsp. mesenteroides (strain ATCC 8293 / DSM 20343 / BCRC 11652 / CCM 1803 / JCM 6124 / NCDO 523 / NBRC 100496 / NCIMB 8023 / NCTC 12954 / NRRL B-1118 / 37Y).